A 38-amino-acid chain; its full sequence is Large ribosomal subunit protein bL36 (38 aa).

Belongs to the bacterial ribosomal protein bL36 family.

In Saccharophagus degradans (strain 2-40 / ATCC 43961 / DSM 17024), this protein is Large ribosomal subunit protein bL36.